The chain runs to 464 residues: ATP-dependent protease ATPase subunit HslU (464 aa).

Residues Val18, 60 to 65, Asp277, Glu342, and Arg414 each bind ATP; that span reads GVGKTE.

This sequence belongs to the ClpX chaperone family. HslU subfamily. A double ring-shaped homohexamer of HslV is capped on each side by a ring-shaped HslU homohexamer. The assembly of the HslU/HslV complex is dependent on binding of ATP.

It is found in the cytoplasm. Functionally, ATPase subunit of a proteasome-like degradation complex; this subunit has chaperone activity. The binding of ATP and its subsequent hydrolysis by HslU are essential for unfolding of protein substrates subsequently hydrolyzed by HslV. HslU recognizes the N-terminal part of its protein substrates and unfolds these before they are guided to HslV for hydrolysis. This Lactobacillus delbrueckii subsp. bulgaricus (strain ATCC 11842 / DSM 20081 / BCRC 10696 / JCM 1002 / NBRC 13953 / NCIMB 11778 / NCTC 12712 / WDCM 00102 / Lb 14) protein is ATP-dependent protease ATPase subunit HslU.